A 240-amino-acid polypeptide reads, in one-letter code: Large ribosomal subunit protein uL1c (240 aa).

Belongs to the universal ribosomal protein uL1 family. In terms of assembly, part of the 50S ribosomal subunit.

Its subcellular location is the plastid. The protein resides in the chloroplast. In terms of biological role, binds directly to 23S rRNA. Might be involved in E site tRNA release (Potential). The sequence is that of Large ribosomal subunit protein uL1c (rpl1) from Cyanidium caldarium (Red alga).